The chain runs to 1482 residues: Chromosome partition protein MukB (1482 aa).

Residue 34–41 participates in ATP binding; that stretch reads GGNGAGKS. The stretch at 333 to 665 forms a coiled coil; that stretch reads ASDHLNLVQT…LEKQIERLSQ (333 aa). The tract at residues 666–783 is flexible hinge; that stretch reads PSGAEDSRMI…ELPLFGRAAR (118 aa). 2 coiled-coil regions span residues 784–1116 and 1209–1260; these read ENRL…AKAG and VDAI…MLNQ.

This sequence belongs to the SMC family. MukB subfamily. Homodimerization via its hinge domain. Binds to DNA via its C-terminal region. Interacts, and probably forms a ternary complex, with MukE and MukF via its C-terminal region. The complex formation is stimulated by calcium or magnesium. Interacts with tubulin-related protein FtsZ.

Its subcellular location is the cytoplasm. The protein localises to the nucleoid. Its function is as follows. Plays a central role in chromosome condensation, segregation and cell cycle progression. Functions as a homodimer, which is essential for chromosome partition. Involved in negative DNA supercoiling in vivo, and by this means organize and compact chromosomes. May achieve or facilitate chromosome segregation by condensation DNA from both sides of a centrally located replisome during cell division. This is Chromosome partition protein MukB from Photorhabdus laumondii subsp. laumondii (strain DSM 15139 / CIP 105565 / TT01) (Photorhabdus luminescens subsp. laumondii).